A 220-amino-acid chain; its full sequence is Deoxyribose-phosphate aldolase 2 (220 aa).

The Proton donor/acceptor role is filled by Asp-89. Catalysis depends on Lys-151, which acts as the Schiff-base intermediate with acetaldehyde. Lys-180 acts as the Proton donor/acceptor in catalysis.

It belongs to the DeoC/FbaB aldolase family. DeoC type 1 subfamily.

It localises to the cytoplasm. It catalyses the reaction 2-deoxy-D-ribose 5-phosphate = D-glyceraldehyde 3-phosphate + acetaldehyde. The protein operates within carbohydrate degradation; 2-deoxy-D-ribose 1-phosphate degradation; D-glyceraldehyde 3-phosphate and acetaldehyde from 2-deoxy-alpha-D-ribose 1-phosphate: step 2/2. Its function is as follows. Catalyzes a reversible aldol reaction between acetaldehyde and D-glyceraldehyde 3-phosphate to generate 2-deoxy-D-ribose 5-phosphate. The sequence is that of Deoxyribose-phosphate aldolase 2 from Staphylococcus aureus (strain MSSA476).